The following is a 349-amino-acid chain: Protein RecA (349 aa).

65–72 (GPESSGKT) lines the ATP pocket.

This sequence belongs to the RecA family.

It is found in the cytoplasm. Functionally, can catalyze the hydrolysis of ATP in the presence of single-stranded DNA, the ATP-dependent uptake of single-stranded DNA by duplex DNA, and the ATP-dependent hybridization of homologous single-stranded DNAs. It interacts with LexA causing its activation and leading to its autocatalytic cleavage. This Azotobacter vinelandii protein is Protein RecA.